The sequence spans 1400 residues: Bromodomain-containing protein 4 (1400 aa).

Residues 1 to 58 form a disordered region; the sequence is MSTESGPGTRLRNLPVMGDGLETSQMSTTQAQAQPQPANAASTNPPPPETSNPNKPKR. The segment covering 23–43 has biased composition (low complexity); that stretch reads TSQMSTTQAQAQPQPANAAST. The Bromo 1 domain maps to 58–164; it reads RQTNQLQYLL…KLFLQKINEL (107 aa). Lys99 participates in a covalent cross-link: Glycyl lysine isopeptide (Lys-Gly) (interchain with G-Cter in SUMO2). 2 disordered regions span residues 176 to 353 and 461 to 616; these read AKGR…KISE and EPEE…YEEK. Over residues 197 to 212 the composition is skewed to low complexity; the sequence is PNTTQASTSPQTQTPQ. Pro residues predominate over residues 244–267; sequence PPQPLQTPSPVPPQPPPPPAPVPQ. Residues 321–337 are compositionally biased toward basic and acidic residues; that stretch reads PRRESSRPVKPPKKDVP. One can recognise a Bromo 2 domain in the interval 349 to 458; that stretch reads SKISEQLKCC…DVFEMRFAKM (110 aa). A Phosphoserine modification is found at Ser471. Low complexity predominate over residues 479-498; sequence KVVAPPSSSDSSSDSSSDSD. Residues Ser485, Ser489, and Ser493 each carry the phosphoserine; by CK2 modification. The segment at 485 to 504 is NPS region; it reads SSSDSSSDSSSDSDSSTDDS. At Ser495 the chain carries Phosphoserine. 3 positions are modified to phosphoserine; by CK2: Ser499, Ser500, and Ser504. Residues 525 to 580 form a BID region region; that stretch reads QLAALSQPQQNKPKKKEKDKKEKKKEKHKKKEEVEENKKSKTKELPPKKTKKNNSS. Basic residues predominate over residues 536–554; the sequence is KPKKKEKDKKEKKKEKHKK. The segment covering 555-571 has biased composition (basic and acidic residues); the sequence is KEEVEENKKSKTKELPP. A Glycyl lysine isopeptide (Lys-Gly) (interchain with G-Cter in SUMO2) cross-link involves residue Lys586. In terms of domain architecture, NET spans 601–683; sequence ESEEEDKCKP…SCLRKKRKPQ (83 aa). Ser602 is modified (phosphoserine). Over residues 606-616 the composition is skewed to basic and acidic residues; the sequence is DKCKPMSYEEK. Glycyl lysine isopeptide (Lys-Gly) (interchain with G-Cter in SUMO2) cross-links involve residues Lys646 and Lys695. Residues 675–1125 form a disordered region; sequence CLRKKRKPQA…GCPPASPAAV (451 aa). The span at 700–713 shows a compositional bias: low complexity; sequence SSSESESTSESSSS. The segment covering 725-745 has biased composition (basic residues); that stretch reads KSKKKGHTGRDQKKHHHHHHP. 4 stretches are compositionally biased toward pro residues: residues 748–787, 835–848, 883–892, and 900–909; these read QPAP…PPSM, PELP…PEHS, PPKPTRPPAV, and PLLPQPPMAQ. Low complexity predominate over residues 928-938; that stretch reads MQMQLYLQQLQ. Composition is skewed to pro residues over residues 955–966, 975–1000, and 1013–1037; these read QPPPPLPPPPHP, PQPP…PRPV, and QPPP…PQPA. The tract at residues 1050–1400 is C-terminal (CTD) region; the sequence is RHHKSDPYSA…LLSIFEENLF (351 aa). Lys1053 participates in a covalent cross-link: Glycyl lysine isopeptide (Lys-Gly) (interchain with G-Cter in SUMO2). Residues 1075 to 1084 are compositionally biased toward polar residues; sequence QMPQFQSLTH. A compositionally biased stretch (low complexity) spans 1085-1095; the sequence is QSPPQQNVQPK. Lys1147 carries the post-translational modification N6-acetyllysine; alternate. A Glycyl lysine isopeptide (Lys-Gly) (interchain with G-Cter in SUMO1); alternate cross-link involves residue Lys1147. Lys1147 is covalently cross-linked (Glycyl lysine isopeptide (Lys-Gly) (interchain with G-Cter in SUMO2); alternate). A phosphoserine mark is found at Ser1153 and Ser1162. Positions 1155–1377 are disordered; it reads IIRSEPFSTS…KREQERRRRE (223 aa). Positions 1211-1232 are enriched in basic and acidic residues; the sequence is PDKDKQKQEPKTPVAPKKDLKI. Lys1233 participates in a covalent cross-link: Glycyl lysine isopeptide (Lys-Gly) (interchain with G-Cter in SUMO2). Residues Ser1237 and Ser1240 each carry the phosphoserine modification. The segment covering 1247–1258 has biased composition (low complexity); it reads TTPSSTAKSSSD. Residues 1259 to 1320 show a composition bias toward basic and acidic residues; that stretch reads SFEHFRRAAR…AHEEARRRQE (62 aa). The span at 1321–1357 shows a compositional bias: low complexity; it reads QQQQQQQQRQEQQQQQQQAAAVAAASAPQAQSSQPQS. The span at 1361–1377 shows a compositional bias: basic and acidic residues; it reads QQRELARKREQERRRRE.

It belongs to the BET family. As to quaternary structure, binds acetylated histone H4. Interacts with p53/TP53; the interaction is direct. Interacts (via CTD region) with CDK9 and CCNT1, acting as an associated component of P-TEFb complex. Interacts with RELA (when acetylated at 'Lys-310'). Interacts (via NET domain) with NSD3, CHD4, BICRA and ATAD5. The interaction with BICRA bridges BRD4 to the GBAF complex. Interacts (via NET domain) with JMJD6 (via JmjC and N-terminal domains); the interaction is stronger in presence of ssRNA and recruits JMJD6 on distal enhancers. Interacts with NSD3. Interacts with NIPBL. Post-translationally, phosphorylation by CK2 disrupt the intramolecular binding between the bromo domain 2 and the NPS region and promotes binding between the NPS and the BID regions, leading to activate the protein and promote binding to acetylated histones. In absence of phosphorylation, BRD4 does not localize to p53/TP53 target gene promoters, phosphorylation promoting recruitment to p53/TP53 target promoters.

Its subcellular location is the nucleus. It localises to the chromosome. Functionally, chromatin reader protein that recognizes and binds acetylated histones and plays a key role in transmission of epigenetic memory across cell divisions and transcription regulation. Remains associated with acetylated chromatin throughout the entire cell cycle and provides epigenetic memory for postmitotic G1 gene transcription by preserving acetylated chromatin status and maintaining high-order chromatin structure. During interphase, plays a key role in regulating the transcription of signal-inducible genes by associating with the P-TEFb complex and recruiting it to promoters. Also recruits P-TEFb complex to distal enhancers, so called anti-pause enhancers in collaboration with JMJD6. BRD4 and JMJD6 are required to form the transcriptionally active P-TEFb complex by displacing negative regulators such as HEXIM1 and 7SKsnRNA complex from P-TEFb, thereby transforming it into an active form that can then phosphorylate the C-terminal domain (CTD) of RNA polymerase II. Regulates differentiation of naive CD4(+) T-cells into T-helper Th17 by promoting recruitment of P-TEFb to promoters. Promotes phosphorylation of 'Ser-2' of the C-terminal domain (CTD) of RNA polymerase II. According to a report, directly acts as an atypical protein kinase and mediates phosphorylation of 'Ser-2' of the C-terminal domain (CTD) of RNA polymerase II; these data however need additional evidences in vivo. In addition to acetylated histones, also recognizes and binds acetylated RELA, leading to further recruitment of the P-TEFb complex and subsequent activation of NF-kappa-B. Also acts as a regulator of p53/TP53-mediated transcription: following phosphorylation by CK2, recruited to p53/TP53 specific target promoters. This Mus musculus (Mouse) protein is Bromodomain-containing protein 4 (Brd4).